Consider the following 187-residue polypeptide: Protein GrpE (187 aa).

Residues 1-15 (MKETKQEEMEVREDC) are compositionally biased toward basic and acidic residues. The tract at residues 1-40 (MKETKQEEMEVREDCESVDSNLEATVEEMESTKGTSEDLE) is disordered.

This sequence belongs to the GrpE family. As to quaternary structure, homodimer.

It is found in the cytoplasm. Participates actively in the response to hyperosmotic and heat shock by preventing the aggregation of stress-denatured proteins, in association with DnaK and GrpE. It is the nucleotide exchange factor for DnaK and may function as a thermosensor. Unfolded proteins bind initially to DnaJ; upon interaction with the DnaJ-bound protein, DnaK hydrolyzes its bound ATP, resulting in the formation of a stable complex. GrpE releases ADP from DnaK; ATP binding to DnaK triggers the release of the substrate protein, thus completing the reaction cycle. Several rounds of ATP-dependent interactions between DnaJ, DnaK and GrpE are required for fully efficient folding. The protein is Protein GrpE of Alkaliphilus oremlandii (strain OhILAs) (Clostridium oremlandii (strain OhILAs)).